A 259-amino-acid polypeptide reads, in one-letter code: MNCSRDTGDELMAALLAEGINLILPPRDNIAPGDLIIADPQGGARLGGWHEVFNLQLSPEVATDPGFKSFQFRASSILQVGVAASVMGRVLQALGLGSGSFSSAFSSSNADTIQLSIVAPANKELTNFDAVLVQMNEAKAEPAQGYTDRNFFVVTKVWRARGIRISVADKSKKQVDLSAKAVEELTAKAKMELKREDTGSYAFLAASQLIFGLTLREVTYKDGAIVDVAPTGPLKFRGKGPGDPFAFIGDDAFVDLPES.

Residue Cys-3 is the site of S-palmitoyl cysteine attachment. 4 beta stranded membrane passes run 70-86, 98-116, 162-179, and 187-203; these read FQFR…AASV, SGSF…IQLS, GIRI…DLSA, and AKAK…SYAF. Positions 244–259 are C-terminal region; the sequence is PFAFIGDDAFVDLPES.

Belongs to the bacterial gasdermin family. In terms of assembly, monomer in solution. Forms large, homooligomeric ring-shaped pores when inserted in membranes. In terms of processing, palmitoylation helps stabilize the inactive state; may self palmitoylate. Palmitoylation plays a significant role in pore formation.

The protein resides in the cytoplasm. It localises to the cell inner membrane. With respect to regulation, the full-length protein before cleavage is inactive: intramolecular interactions between the N-terminal domain and the C-terminal region as well as the lipid modification, mediate autoinhibition. The pyroptosis-like-inducing activity is carried by the released N-terminal domain (Gasdermin bGSDM, N-terminus). Precursor of a pore-forming protein involved in defense against bacteriophages. Expression of bGSDM and the neighboring protease gene (Ga0098714_109514) is toxic in E.coli on solid medium. Cleavage of this precursor by its dedicated protease releases the active moiety (gasdermin bGSDM, N-terminus) which inserts into membranes, forming pores and triggering cell death. Functionally, pore-forming protein that causes membrane permeabilization via a pyroptosis-like activity. Makes ring-like pores when released. In Bradyrhizobium tropiciagri, this protein is Gasdermin bGSDM.